The following is a 466-amino-acid chain: Secreted RxLR effector protein 101 (466 aa).

The N-terminal stretch at Met1–Ala21 is a signal peptide. The short motif at Arg48–Arg63 is the RxLR-dEER element. 2 disordered regions span residues Lys99–Ala127 and Arg384–Ser405. Residues Lys109–Thr121 show a composition bias toward basic residues. The span at Thr385–Leu395 shows a compositional bias: polar residues.

It belongs to the RxLR effector family.

The protein localises to the secreted. The protein resides in the host nucleus. Functionally, secreted effector that partially suppresses the host cell death induced by cell death-inducing proteins. This is Secreted RxLR effector protein 101 from Plasmopara viticola (Downy mildew of grapevine).